The chain runs to 321 residues: Epoxyqueuosine reductase (321 aa).

The active-site Proton donor is Asp-137. One can recognise a 4Fe-4S ferredoxin-type domain in the interval Glu-179 to Val-211. Residues Cys-191, Cys-194, Cys-197, Cys-201, Cys-217, Cys-245, Cys-248, and Cys-252 each contribute to the [4Fe-4S] cluster site.

It belongs to the QueG family. Monomer. The cofactor is cob(II)alamin. [4Fe-4S] cluster serves as cofactor.

It is found in the cytoplasm. It catalyses the reaction epoxyqueuosine(34) in tRNA + AH2 = queuosine(34) in tRNA + A + H2O. Its pathway is tRNA modification; tRNA-queuosine biosynthesis. In terms of biological role, catalyzes the conversion of epoxyqueuosine (oQ) to queuosine (Q), which is a hypermodified base found in the wobble positions of tRNA(Asp), tRNA(Asn), tRNA(His) and tRNA(Tyr). This Synechococcus sp. (strain CC9605) protein is Epoxyqueuosine reductase.